Reading from the N-terminus, the 298-residue chain is uncharacterized protein (298 aa).

The HTH lysR-type domain maps to 1 to 61; it reads MDIFISKKMR…TRKDNNISLN (61 aa). Residues 21 to 40 constitute a DNA-binding region (H-T-H motif); that stretch reads IARAAEKIHMTASPFGKSIA.

Belongs to the LysR transcriptional regulatory family.

This is an uncharacterized protein from Escherichia coli (strain K12).